Reading from the N-terminus, the 113-residue chain is Putative pterin-4-alpha-carbinolamine dehydratase (113 aa).

Belongs to the pterin-4-alpha-carbinolamine dehydratase family.

It catalyses the reaction (4aS,6R)-4a-hydroxy-L-erythro-5,6,7,8-tetrahydrobiopterin = (6R)-L-erythro-6,7-dihydrobiopterin + H2O. The polypeptide is Putative pterin-4-alpha-carbinolamine dehydratase (Nitrosomonas eutropha (strain DSM 101675 / C91 / Nm57)).